A 68-amino-acid chain; its full sequence is Glu S.griseus protease inhibitor (68 aa).

Ser1 carries the post-translational modification N-acetylserine. Cysteines 3 and 48 form a disulfide.

This sequence belongs to the protease inhibitor I13 (potato type I serine protease inhibitor) family.

Competitively inhibits Glu S.griseus protease by forming probably a 1:1 complex. BGIA has no inhibitory activity against 2 other acidic amino acid-specific endopeptidases (S.aureus protease V8 and B.subtilis proteinase), chymotrypsin, trypsin, pancreatic elastase, and papain, although subtilisin Carlsberg was strongly inhibited. The polypeptide is Glu S.griseus protease inhibitor (Momordica charantia (Bitter gourd)).